We begin with the raw amino-acid sequence, 550 residues long: Chaperonin GroEL (550 aa).

ATP contacts are provided by residues threonine 29–proline 32, lysine 50, aspartate 86–threonine 90, glycine 414, and aspartate 495.

This sequence belongs to the chaperonin (HSP60) family. As to quaternary structure, forms a cylinder of 14 subunits composed of two heptameric rings stacked back-to-back. Interacts with the co-chaperonin GroES.

It is found in the cytoplasm. It carries out the reaction ATP + H2O + a folded polypeptide = ADP + phosphate + an unfolded polypeptide.. Its function is as follows. Together with its co-chaperonin GroES, plays an essential role in assisting protein folding. The GroEL-GroES system forms a nano-cage that allows encapsulation of the non-native substrate proteins and provides a physical environment optimized to promote and accelerate protein folding. The polypeptide is Chaperonin GroEL (Parvibaculum lavamentivorans (strain DS-1 / DSM 13023 / NCIMB 13966)).